A 615-amino-acid chain; its full sequence is Alpha-1,3-galactosidase B (615 aa).

Positions 1 to 23 are cleaved as a signal peptide; that stretch reads MRTFLSLKTCLLSALLLCVNSIA. PbH1 repeat units follow at residues 282–313, 423–445, 446–467, 478–500, 520–541, and 543–573; these read SKNISFNDVHIIPNTSKKRVLSGHDDGFHFMG, TPDAEIRNCHFGSCRARGLLVST, PGKVIIENNVFESSGSAILIAG, VKDVLIRNNDFRYPCNSSIYQFC, HRNIRIMDNTFHLFDYPILFAR, and VNGLTFSSNTLIRDTTYQPYHYRKEGITLEA.

This sequence belongs to the glycosyl hydrolase 110 family. B subfamily.

The catalysed reaction is Hydrolysis of terminal, non-reducing branched (1-&gt;3)-alpha-D-galactosidic residues, producing free D-galactose.. It carries out the reaction Hydrolysis of terminal, non-reducing linear (1-&gt;3)-alpha-D-galactosidic residues, producing free D-galactose.. The enzyme catalyses Hydrolysis of terminal, non-reducing alpha-D-galactose residues in alpha-D-galactosides, including galactose oligosaccharides, galactomannans and galactolipids.. Alpha-galactosidase. Removes both branched alpha-1,3-linked galactose residues of blood group B antigens and linear alpha-1,3-linked galactose structures. This Bacteroides thetaiotaomicron (strain ATCC 29148 / DSM 2079 / JCM 5827 / CCUG 10774 / NCTC 10582 / VPI-5482 / E50) protein is Alpha-1,3-galactosidase B (glaB).